The following is a 277-amino-acid chain: ATP synthase subunit a (277 aa).

The next 5 helical transmembrane spans lie at 40–60, 98–118, 154–174, 219–239, and 245–265; these read AWHV…LIIF, SALI…MNLM, DLNL…FYSI, LFGN…IGYF, and FMWA…FMML.

This sequence belongs to the ATPase A chain family. As to quaternary structure, F-type ATPases have 2 components, CF(1) - the catalytic core - and CF(0) - the membrane proton channel. CF(1) has five subunits: alpha(3), beta(3), gamma(1), delta(1), epsilon(1). CF(0) has three main subunits: a(1), b(2) and c(9-12). The alpha and beta chains form an alternating ring which encloses part of the gamma chain. CF(1) is attached to CF(0) by a central stalk formed by the gamma and epsilon chains, while a peripheral stalk is formed by the delta and b chains.

The protein localises to the cell inner membrane. Functionally, key component of the proton channel; it plays a direct role in the translocation of protons across the membrane. The polypeptide is ATP synthase subunit a (Alteromonas mediterranea (strain DSM 17117 / CIP 110805 / LMG 28347 / Deep ecotype)).